A 492-amino-acid chain; its full sequence is Diacylglycerol kinase 7 (492 aa).

In terms of domain architecture, DAGKc spans 90 to 248 (APHAPMVVFI…SWKIVVSMPS (159 aa)).

It belongs to the eukaryotic diacylglycerol kinase family. In terms of assembly, monomer. Highly expressed in flowers, and at low levels in roots, stems and leaves.

It catalyses the reaction a 1,2-diacyl-sn-glycerol + ATP = a 1,2-diacyl-sn-glycero-3-phosphate + ADP + H(+). In terms of biological role, phosphorylates the second messenger diacylglycerol (DAG) to generate phosphatidic acid (PA), another important signaling molecule. PA is required for plant development and responses to abiotic stress and pathogen attack. May be involved in the accumulation of PA during cold stress xhibits high specificity for 1,2-dioleoyl-sn-glycerol (1,2-DOG), 1-palmitoyl, 2-oleoyl-sn-glycerol (1,2 POG), 1-stearoyl, 2-linoleoyl-sn-glycerol (1,2-SLG) and 1-oleoyl, 2-palmitoyl-sn-glycerol (1,2-OPG). The chain is Diacylglycerol kinase 7 (DGK7) from Arabidopsis thaliana (Mouse-ear cress).